We begin with the raw amino-acid sequence, 182 residues long: tRNA-splicing endonuclease (182 aa).

Active-site residues include Tyr119, His127, and Lys158.

Belongs to the tRNA-intron endonuclease family. Archaeal short subfamily. Homotetramer; although the tetramer contains four active sites, only two participate in the cleavage. Therefore, it should be considered as a dimer of dimers.

It carries out the reaction pretRNA = a 3'-half-tRNA molecule with a 5'-OH end + a 5'-half-tRNA molecule with a 2',3'-cyclic phosphate end + an intron with a 2',3'-cyclic phosphate and a 5'-hydroxyl terminus.. Functionally, endonuclease that removes tRNA introns. Cleaves pre-tRNA at the 5'- and 3'-splice sites to release the intron. The products are an intron and two tRNA half-molecules bearing 2',3' cyclic phosphate and 5'-OH termini. Recognizes a pseudosymmetric substrate in which 2 bulged loops of 3 bases are separated by a stem of 4 bp. This is tRNA-splicing endonuclease from Saccharolobus islandicus (strain L.S.2.15 / Lassen #1) (Sulfolobus islandicus).